The primary structure comprises 304 residues: Opsin-1 (304 aa).

Residues 1–45 are Extracellular-facing; it reads MIHPEQVADMLRPTTSTTSSHVPGPVPTVVPTPTEYQTLGETGHR. Residues 46–66 form a helical membrane-spanning segment; it reads TLWVTFALMVLSSGIFALLSW. Residues 74–94 traverse the membrane as a helical segment; that stretch reads LFHVITTLITVVASLSYFAMA. Residues 129–149 traverse the membrane as a helical segment; the sequence is YVDWALTTPLLLLELCLLAGV. The helical transmembrane segment at 154–174 threads the bilayer; it reads TLMAIVADVIMVLCGLFAALG. The chain crosses the membrane as a helical span at residues 183–203; that stretch reads WGWYTIGCFSYLFVIWHVALH. Residues 219 to 239 traverse the membrane as a helical segment; the sequence is FTGLAVFALLLWTAYPIIWGI. The chain crosses the membrane as a helical span at residues 252-272; sequence ILIYTVLDLLAKPVFGFWLLL. K263 is modified (N6-(retinylidene)lysine). The Cytoplasmic portion of the chain corresponds to 273 to 304; the sequence is SHRAMPETNIDLPGYWSHGLATEGRIRIGEED.

This sequence belongs to the archaeal/bacterial/fungal opsin family. In terms of processing, binds all-trans retinal via a protonated Schiff base linkage.

The protein resides in the membrane. Its function is as follows. Could facilitate a sensory photoresponse. The chain is Opsin-1 (nop-1) from Neurospora crassa (strain ATCC 24698 / 74-OR23-1A / CBS 708.71 / DSM 1257 / FGSC 987).